The sequence spans 398 residues: Acetate kinase (398 aa).

Mg(2+) is bound at residue Asn8. An ATP-binding site is contributed by Lys15. Arg89 is a binding site for substrate. Residue Asp146 is the Proton donor/acceptor of the active site. ATP-binding positions include 206 to 210, 283 to 285, and 331 to 335; these read HIGNG, DMR, and GMGEN. Glu383 lines the Mg(2+) pocket.

Belongs to the acetokinase family. As to quaternary structure, homodimer. It depends on Mg(2+) as a cofactor. Mn(2+) is required as a cofactor.

It localises to the cytoplasm. The enzyme catalyses acetate + ATP = acetyl phosphate + ADP. It functions in the pathway metabolic intermediate biosynthesis; acetyl-CoA biosynthesis; acetyl-CoA from acetate: step 1/2. Catalyzes the formation of acetyl phosphate from acetate and ATP. Can also catalyze the reverse reaction. In Streptococcus pyogenes serotype M5 (strain Manfredo), this protein is Acetate kinase.